Consider the following 437-residue polypeptide: Testis-specific Y-encoded-like protein 1 (437 aa).

The disordered stretch occupies residues 1–81 (MSGLDGVKRT…QDAAGRGGTP (81 aa)). Over residues 11–26 (TPLQTHSIIISDQVPS) the composition is skewed to polar residues. Over residues 28–40 (QDAHQYLRLRDQS) the composition is skewed to basic and acidic residues. Residue Lys156 forms a Glycyl lysine isopeptide (Lys-Gly) (interchain with G-Cter in SUMO2) linkage.

This sequence belongs to the nucleosome assembly protein (NAP) family. Post-translationally, ubiquitinated by the CRL2(APPBP2) complex, which recognizes the Arg-Xaa-Xaa-Gly sequence at the C-terminus, leading to its degradation. In terms of tissue distribution, expressed in testis, ovary, liver, spleen, brain, kidney, prostate, lung, liver, and heart.

The protein localises to the nucleus. It localises to the nucleolus. The chain is Testis-specific Y-encoded-like protein 1 (TSPYL1) from Homo sapiens (Human).